We begin with the raw amino-acid sequence, 434 residues long: Adenylosuccinate synthetase (434 aa).

GTP contacts are provided by residues 13-19 (GDEGKGK) and 41-43 (GHT). The Proton acceptor role is filled by Asp-14. Mg(2+) contacts are provided by Asp-14 and Gly-41. IMP-binding positions include 14-17 (DEGK), 39-42 (NAGH), Thr-133, Arg-147, Gln-228, Thr-243, and Arg-307. Residue His-42 is the Proton donor of the active site. 303 to 309 (STTGRKR) contributes to the substrate binding site. GTP-binding positions include Arg-309, 335-337 (KID), and 417-419 (STG).

Belongs to the adenylosuccinate synthetase family. Homodimer. Requires Mg(2+) as cofactor.

It is found in the cytoplasm. It carries out the reaction IMP + L-aspartate + GTP = N(6)-(1,2-dicarboxyethyl)-AMP + GDP + phosphate + 2 H(+). It participates in purine metabolism; AMP biosynthesis via de novo pathway; AMP from IMP: step 1/2. Functionally, plays an important role in the de novo pathway of purine nucleotide biosynthesis. Catalyzes the first committed step in the biosynthesis of AMP from IMP. The chain is Adenylosuccinate synthetase from Wigglesworthia glossinidia brevipalpis.